Here is a 309-residue protein sequence, read N- to C-terminus: NAD kinase (309 aa).

Aspartate 89 serves as the catalytic Proton acceptor. NAD(+) is bound by residues 89–90 (DG), 163–164 (NE), arginine 191, aspartate 193, and 204–209 (TAYSLS).

This sequence belongs to the NAD kinase family. A divalent metal cation is required as a cofactor.

It is found in the cytoplasm. The enzyme catalyses NAD(+) + ATP = ADP + NADP(+) + H(+). Involved in the regulation of the intracellular balance of NAD and NADP, and is a key enzyme in the biosynthesis of NADP. Catalyzes specifically the phosphorylation on 2'-hydroxyl of the adenosine moiety of NAD to yield NADP. This is NAD kinase from Shewanella halifaxensis (strain HAW-EB4).